The chain runs to 238 residues: tRNA (guanine-N(7)-)-methyltransferase (238 aa).

S-adenosyl-L-methionine is bound by residues E68, E93, D120, and D143. D143 is an active-site residue. Substrate is bound by residues K147, D179, and 216–219; that span reads TKFE.

The protein belongs to the class I-like SAM-binding methyltransferase superfamily. TrmB family.

It carries out the reaction guanosine(46) in tRNA + S-adenosyl-L-methionine = N(7)-methylguanosine(46) in tRNA + S-adenosyl-L-homocysteine. The protein operates within tRNA modification; N(7)-methylguanine-tRNA biosynthesis. Catalyzes the formation of N(7)-methylguanine at position 46 (m7G46) in tRNA. This is tRNA (guanine-N(7)-)-methyltransferase from Shewanella sp. (strain W3-18-1).